Reading from the N-terminus, the 208-residue chain is FMN-dependent NADH:quinone oxidoreductase (208 aa).

Residues 17 to 19 (SNS), 99 to 102 (MWNL), and 143 to 146 (SRGG) contribute to the FMN site.

This sequence belongs to the azoreductase type 1 family. As to quaternary structure, homodimer. The cofactor is FMN.

The enzyme catalyses 2 a quinone + NADH + H(+) = 2 a 1,4-benzosemiquinone + NAD(+). It catalyses the reaction N,N-dimethyl-1,4-phenylenediamine + anthranilate + 2 NAD(+) = 2-(4-dimethylaminophenyl)diazenylbenzoate + 2 NADH + 2 H(+). Functionally, quinone reductase that provides resistance to thiol-specific stress caused by electrophilic quinones. Its function is as follows. Also exhibits azoreductase activity. Catalyzes the reductive cleavage of the azo bond in aromatic azo compounds to the corresponding amines. The chain is FMN-dependent NADH:quinone oxidoreductase from Staphylococcus haemolyticus (strain JCSC1435).